Reading from the N-terminus, the 381-residue chain is E3 ubiquitin-protein ligase RNF13 (381 aa).

Residues 1 to 34 (MLLSIGMLMLSATQVYTILTVQLFAFLNLLPVEA) form the signal peptide. Residues 35 to 182 (DILAYNFENA…VPEFSLPLEY (148 aa)) are Lumenal-facing. The PA domain occupies 65–160 (KGFLINSKPE…GESSANSLKD (96 aa)). An N-linked (GlcNAc...) asparagine glycan is attached at Asn-88. The helical transmembrane segment at 183–203 (YLIPFLIIVGICLILIVIFMI) threads the bilayer. Residues 204 to 381 (TKFVQDRHRA…ERDYNIANTV (178 aa)) are Cytoplasmic-facing. The RING-type; atypical zinc finger occupies 240–282 (CAICLDEYEDGDKLRILPCSHAYHCKCVDPWLTKTKKTCPVCK). Residues 285–381 (VVPSQGDSDS…ERDYNIANTV (97 aa)) are disordered. Acidic residues-rich tracts occupy residues 292–304 (SDSD…EENE) and 339–357 (SDYE…AENE).

As to quaternary structure, interacts with ERN1. In terms of processing, autoubiquitinated. Widely expressed (at protein level). In normal pancreas, expressed in islets, but not in ducts, nor in acini (at protein level).

It is found in the endoplasmic reticulum membrane. It localises to the late endosome membrane. The protein resides in the lysosome membrane. Its subcellular location is the nucleus inner membrane. The enzyme catalyses S-ubiquitinyl-[E2 ubiquitin-conjugating enzyme]-L-cysteine + [acceptor protein]-L-lysine = [E2 ubiquitin-conjugating enzyme]-L-cysteine + N(6)-ubiquitinyl-[acceptor protein]-L-lysine.. It functions in the pathway protein modification; protein ubiquitination. Its function is as follows. E3 ubiquitin-protein ligase that regulates cell proliferation. Involved in apoptosis regulation. Mediates ER stress-induced activation of JNK signaling pathway and apoptosis by promoting ERN1 activation and splicing of XBP1 mRNA. Also involved in protein trafficking and localization. This chain is E3 ubiquitin-protein ligase RNF13, found in Homo sapiens (Human).